A 97-amino-acid polypeptide reads, in one-letter code: Cell division protein FtsL (97 aa).

The Cytoplasmic segment spans residues 1 to 11 (MSRLFVKRLPT). Residues 12-32 (GSFLMLLLYIGLLLSAIAVAY) form a helical membrane-spanning segment. Residues 33–97 (STYWNRQLLN…DPAEVRMVAP (65 aa)) lie on the Periplasmic side of the membrane.

This sequence belongs to the FtsL family. Part of a complex composed of FtsB, FtsL and FtsQ.

The protein resides in the cell inner membrane. Essential cell division protein. May link together the upstream cell division proteins, which are predominantly cytoplasmic, with the downstream cell division proteins, which are predominantly periplasmic. This chain is Cell division protein FtsL, found in Pseudomonas aeruginosa (strain ATCC 15692 / DSM 22644 / CIP 104116 / JCM 14847 / LMG 12228 / 1C / PRS 101 / PAO1).